The sequence spans 102 residues: Monothiol glutaredoxin-S10 (102 aa).

Residues 1–101 (MDVVARLASQ…ILLKEAGALW (101 aa)) form the Glutaredoxin domain. C21 serves as a coordination point for [2Fe-2S] cluster. The Responsive for interaction with TGA factors motif lies at 99 to 102 (ALWL).

This sequence belongs to the glutaredoxin family. CC-type subfamily.

It is found in the cytoplasm. It localises to the nucleus. May only reduce GSH-thiol disulfides, but not protein disulfides. In Arabidopsis thaliana (Mouse-ear cress), this protein is Monothiol glutaredoxin-S10 (GRXS10).